We begin with the raw amino-acid sequence, 846 residues long: Translation initiation factor IF-2 (846 aa).

The interval 198–219 (YKREEEEKKSKAKKAGGKGFKK) is disordered. Over residues 207–219 (SKAKKAGGKGFKK) the composition is skewed to basic residues. A tr-type G domain is found at 345-512 (SRAPVVTIMG…AVLLQSEVLE (168 aa)). The interval 354–361 (GHVDHGKT) is G1. A GTP-binding site is contributed by 354-361 (GHVDHGKT). A G2 region spans residues 379-383 (GITQH). Residues 400 to 403 (DTPG) are G3. Residues 400–404 (DTPGH) and 454–457 (NKID) contribute to the GTP site. Residues 454–457 (NKID) are G4. The interval 490 to 492 (SAK) is G5.

This sequence belongs to the TRAFAC class translation factor GTPase superfamily. Classic translation factor GTPase family. IF-2 subfamily.

It is found in the cytoplasm. In terms of biological role, one of the essential components for the initiation of protein synthesis. Protects formylmethionyl-tRNA from spontaneous hydrolysis and promotes its binding to the 30S ribosomal subunits. Also involved in the hydrolysis of GTP during the formation of the 70S ribosomal complex. The protein is Translation initiation factor IF-2 of Francisella tularensis subsp. novicida (strain U112).